Consider the following 201-residue polypeptide: dCTP deaminase, dUMP-forming (201 aa).

Residues 101-106 (KSSLGR), Asp119, 127-129 (TLE), Gln148, Tyr162, and Gln174 contribute to the dCTP site. Glu129 functions as the Proton donor/acceptor in the catalytic mechanism.

Belongs to the dCTP deaminase family. As to quaternary structure, homotrimer.

The catalysed reaction is dCTP + 2 H2O = dUMP + NH4(+) + diphosphate. It functions in the pathway pyrimidine metabolism; dUMP biosynthesis; dUMP from dCTP: step 1/1. Bifunctional enzyme that catalyzes both the deamination of dCTP to dUTP and the hydrolysis of dUTP to dUMP without releasing the toxic dUTP intermediate. This chain is dCTP deaminase, dUMP-forming, found in Clavibacter michiganensis subsp. michiganensis (strain NCPPB 382).